A 486-amino-acid polypeptide reads, in one-letter code: Siroheme synthase (486 aa).

The segment at 1 to 203 (MNYFPIFANL…RQNTLAEREL (203 aa)) is precorrin-2 dehydrogenase /sirohydrochlorin ferrochelatase. NAD(+) is bound by residues 22 to 23 (AV) and 43 to 44 (KH). Serine 128 is modified (phosphoserine). Positions 217-486 (GSVSLVGAGP…LGTGQEQQAA (270 aa)) are uroporphyrinogen-III C-methyltransferase. S-adenosyl-L-methionine is bound at residue proline 226. The active-site Proton acceptor is aspartate 249. Lysine 271 acts as the Proton donor in catalysis. Residues 302 to 304 (GGD), valine 307, 332 to 333 (TA), methionine 384, and glycine 413 contribute to the S-adenosyl-L-methionine site.

In the N-terminal section; belongs to the precorrin-2 dehydrogenase / sirohydrochlorin ferrochelatase family. It in the C-terminal section; belongs to the precorrin methyltransferase family.

The enzyme catalyses uroporphyrinogen III + 2 S-adenosyl-L-methionine = precorrin-2 + 2 S-adenosyl-L-homocysteine + H(+). The catalysed reaction is precorrin-2 + NAD(+) = sirohydrochlorin + NADH + 2 H(+). It catalyses the reaction siroheme + 2 H(+) = sirohydrochlorin + Fe(2+). Its pathway is cofactor biosynthesis; adenosylcobalamin biosynthesis; precorrin-2 from uroporphyrinogen III: step 1/1. The protein operates within cofactor biosynthesis; adenosylcobalamin biosynthesis; sirohydrochlorin from precorrin-2: step 1/1. It functions in the pathway porphyrin-containing compound metabolism; siroheme biosynthesis; precorrin-2 from uroporphyrinogen III: step 1/1. It participates in porphyrin-containing compound metabolism; siroheme biosynthesis; siroheme from sirohydrochlorin: step 1/1. Its pathway is porphyrin-containing compound metabolism; siroheme biosynthesis; sirohydrochlorin from precorrin-2: step 1/1. In terms of biological role, multifunctional enzyme that catalyzes the SAM-dependent methylations of uroporphyrinogen III at position C-2 and C-7 to form precorrin-2 via precorrin-1. Then it catalyzes the NAD-dependent ring dehydrogenation of precorrin-2 to yield sirohydrochlorin. Finally, it catalyzes the ferrochelation of sirohydrochlorin to yield siroheme. This is Siroheme synthase from Neisseria meningitidis serogroup A / serotype 4A (strain DSM 15465 / Z2491).